The following is a 24-amino-acid chain: Calcium-binding shell glycoprotein P50 (24 aa).

The tract at residues 1–24 (KDALEHTGFAPKKDGEEHVEWNYN) is disordered.

Post-translationally, glycosylated. In terms of tissue distribution, nacreous and prismatic layers of the shell.

In terms of biological role, calcium-binding. This chain is Calcium-binding shell glycoprotein P50, found in Unio pictorum (Painter's mussel).